Consider the following 149-residue polypeptide: Down syndrome critical region protein 9 (149 aa).

Residues 1–41 (MGRICPVNSRARRLRARPGRPSGDSLPYHQLQGGAPRLWSP) form a disordered region.

The protein is Down syndrome critical region protein 9 (DSCR9) of Pan troglodytes (Chimpanzee).